A 245-amino-acid chain; its full sequence is Type III pantothenate kinase (245 aa).

6–13 (DVGNTAMK) contacts ATP. Substrate is bound by residues Tyr-93 and 100-103 (GVDR). Asp-102 serves as the catalytic Proton acceptor. Asp-121 provides a ligand contact to K(+). Ser-124 serves as a coordination point for ATP. Thr-175 lines the substrate pocket.

Belongs to the type III pantothenate kinase family. As to quaternary structure, homodimer. It depends on NH4(+) as a cofactor. K(+) serves as cofactor.

The protein localises to the cytoplasm. It carries out the reaction (R)-pantothenate + ATP = (R)-4'-phosphopantothenate + ADP + H(+). Its pathway is cofactor biosynthesis; coenzyme A biosynthesis; CoA from (R)-pantothenate: step 1/5. Its function is as follows. Catalyzes the phosphorylation of pantothenate (Pan), the first step in CoA biosynthesis. The protein is Type III pantothenate kinase of Alcanivorax borkumensis (strain ATCC 700651 / DSM 11573 / NCIMB 13689 / SK2).